Here is a 603-residue protein sequence, read N- to C-terminus: Elongation factor 4 (603 aa).

A tr-type G domain is found at D7–Q191. Residues D19–T24 and N138–D141 each bind GTP.

Belongs to the TRAFAC class translation factor GTPase superfamily. Classic translation factor GTPase family. LepA subfamily.

The protein resides in the cell inner membrane. It carries out the reaction GTP + H2O = GDP + phosphate + H(+). Its function is as follows. Required for accurate and efficient protein synthesis under certain stress conditions. May act as a fidelity factor of the translation reaction, by catalyzing a one-codon backward translocation of tRNAs on improperly translocated ribosomes. Back-translocation proceeds from a post-translocation (POST) complex to a pre-translocation (PRE) complex, thus giving elongation factor G a second chance to translocate the tRNAs correctly. Binds to ribosomes in a GTP-dependent manner. In Rhodopseudomonas palustris (strain HaA2), this protein is Elongation factor 4.